Reading from the N-terminus, the 519-residue chain is GATA zinc finger domain-containing protein 8 (519 aa).

4 disordered regions span residues 25–182, 198–249, 273–359, and 431–453; these read YSTG…SSSG, SNIN…SNNT, SNNM…NNKQ, and DERQ…KRRE. Residues 37–156 show a composition bias toward low complexity; sequence TNNSQNKTNN…SSSITSPSSN (120 aa). Residues 172–182 are compositionally biased toward polar residues; that stretch reads SPNNKQVSSSG. Positions 273-357 are enriched in low complexity; that stretch reads SNNMNINNQH…SNINNNNNNN (85 aa). The stretch at 429–461 forms a coiled coil; the sequence is KTDERQQKKRMESDKNAEKREKRREASRLLNNV. The GATA-type zinc finger occupies 462–487; sequence CRNCKTTETPEWRKGPDGTKSLCNAC.

The protein is GATA zinc finger domain-containing protein 8 (gtaH) of Dictyostelium discoideum (Social amoeba).